The chain runs to 568 residues: Sphingosine-1-phosphate lyase 1 (568 aa).

At 1–41 the chain is on the lumenal side; sequence MPSTDLLKLKDFEPYLEILEAYSTKAKNYVNGYCTKYEPWQ. Residues 42–62 form a helical; Signal-anchor for type III membrane protein membrane-spanning segment; it reads LIAGSVLCTLLVVWVYELIFQ. The Cytoplasmic portion of the chain corresponds to 63–568; sequence PESLWSRFKN…NQMNGSPKPR (506 aa). Residue lysine 353 is modified to N6-(pyridoxal phosphate)lysine; alternate. Lysine 353 bears the N6-acetyllysine; alternate mark. Residues tyrosine 356 and tyrosine 366 each carry the 3'-nitrotyrosine modification. A Phosphoserine modification is found at serine 564.

It belongs to the group II decarboxylase family. Sphingosine-1-phosphate lyase subfamily. In terms of assembly, homodimer. The cofactor is pyridoxal 5'-phosphate.

The protein resides in the endoplasmic reticulum membrane. The catalysed reaction is sphinganine 1-phosphate = hexadecanal + phosphoethanolamine. The enzyme catalyses sphing-4-enine 1-phosphate = (2E)-hexadecenal + phosphoethanolamine. Its pathway is lipid metabolism; sphingolipid metabolism. In terms of biological role, cleaves phosphorylated sphingoid bases (PSBs), such as sphingosine-1-phosphate, into fatty aldehydes and phosphoethanolamine. Elevates stress-induced ceramide production and apoptosis. Required for global lipid homeostasis in liver and cholesterol homeostasis in fibroblasts. Involved in the regulation of pro-inflammatory response and neutrophil trafficking. Modulates neuronal autophagy via phosphoethanolamine production which regulates accumulation of aggregate-prone proteins such as APP. Seems to play a role in establishing neuronal contact sites and axonal maintenance. The chain is Sphingosine-1-phosphate lyase 1 from Rattus norvegicus (Rat).